We begin with the raw amino-acid sequence, 375 residues long: Probable L-tyrosine/L-aspartate decarboxylase (375 aa).

Lys226 bears the N6-(pyridoxal phosphate)lysine mark.

Belongs to the group II decarboxylase family. MfnA subfamily. The cofactor is pyridoxal 5'-phosphate.

The catalysed reaction is L-tyrosine + H(+) = tyramine + CO2. It catalyses the reaction L-aspartate + H(+) = beta-alanine + CO2. Its pathway is cofactor biosynthesis; methanofuran biosynthesis. It functions in the pathway cofactor biosynthesis; coenzyme A biosynthesis. Functionally, catalyzes the decarboxylation of L-tyrosine to produce tyramine for methanofuran biosynthesis. Can also catalyze the decarboxylation of L-aspartate to produce beta-alanine for coenzyme A (CoA) biosynthesis. This chain is Probable L-tyrosine/L-aspartate decarboxylase, found in Methanocella arvoryzae (strain DSM 22066 / NBRC 105507 / MRE50).